Consider the following 94-residue polypeptide: uncharacterized protein (94 aa).

The N-terminal stretch at Met1–Ala19 is a signal peptide.

The protein belongs to the protease inhibitor I9 family.

This is an uncharacterized protein from Neurospora crassa (strain ATCC 24698 / 74-OR23-1A / CBS 708.71 / DSM 1257 / FGSC 987).